The sequence spans 125 residues: Small ribosomal subunit protein bS6m (125 aa).

The protein belongs to the bacterial ribosomal protein bS6 family. Component of the mitochondrial ribosome small subunit (28S) which comprises a 12S rRNA and about 30 distinct proteins.

The protein localises to the mitochondrion. The chain is Small ribosomal subunit protein bS6m (Mrps6) from Mus musculus (Mouse).